Reading from the N-terminus, the 353-residue chain is Zinc transporter 5 (353 aa).

Positions 1–27 are cleaved as a signal peptide; that stretch reads MATAAMTKVFVLLFLVAACYLPAHAAA. The Extracellular segment spans residues 28–48; it reads AECDCATDTAGRDKAQALRLK. Residues 49–69 traverse the membrane as a helical segment; the sequence is VIAIFCILAGSTVGAALPSLG. At 70–86 the chain is on the cytoplasmic side; sequence GRFPAIQPETDVFLSVK. Residues 87-107 traverse the membrane as a helical segment; sequence AFAGGVILATGLVHILPAAFE. The Extracellular segment spans residues 108–121; the sequence is ALSSPCLVGGPWKR. Residues 122–142 form a helical membrane-spanning segment; the sequence is FPFAGMVAMVSAIGTLIVDTV. Residues 143–198 lie on the Cytoplasmic side of the membrane; that stretch reads ATGYFHRTDAKRKAAAVADEPADDLEASDEHSHGHAHGMSVMSVAPAGEEDLVRHR. A helical transmembrane segment spans residues 199-219; that stretch reads VISQVLELGVVVHSLIIGMSL. The Extracellular portion of the chain corresponds to 220-230; sequence GASDFPSTVRP. The helical transmembrane segment at 231 to 251 threads the bilayer; the sequence is LVPALTFHQFFEGIGLGGCIV. Topologically, residues 252–260 are cytoplasmic; that stretch reads QAKFRVRSV. The helical transmembrane segment at 261–281 threads the bilayer; it reads VTMALFFSLTTPAGIVVGIGI. Topologically, residues 282-292 are extracellular; it reads SSVYDANSPTA. The helical transmembrane segment at 293-313 threads the bilayer; the sequence is LVVQGLLEAAAAGILVYMALV. Topologically, residues 314–332 are cytoplasmic; the sequence is DILAEDFMKTKVQRRGRLQ. The chain crosses the membrane as a helical span at residues 333 to 353; the sequence is LAMNVALLLGAGLMSMIAIWA.

The protein belongs to the ZIP transporter (TC 2.A.5) family.

It is found in the cell membrane. Its function is as follows. Zinc transporter that mediates zinc uptake from the rhizosphere and may be responsible for the translocation of zinc within the plant. This chain is Zinc transporter 5 (ZIP5), found in Oryza sativa subsp. japonica (Rice).